Reading from the N-terminus, the 450-residue chain is F-box protein KIB3 (450 aa).

Residues 20–50 (DLVRLILERLSFVDFHRARCVSSTWYVASKS) form the F-box domain.

It is found in the cytoplasm. The protein resides in the nucleus. It localises to the nucleolus. Its function is as follows. Component of SCF(ASK-cullin-F-box) E3 ubiquitin ligase complexes, which may mediate the ubiquitination and subsequent proteasomal degradation of target proteins. Required for brassinosteroid (BR) signal transduction. Mediates ASK7/BIN2/SK21 inactivation both by competing with substrate binding (e.g. BZR1) and by promoting its ubiquitination and subsequent proteasomal degradation. This Arabidopsis thaliana (Mouse-ear cress) protein is F-box protein KIB3.